The chain runs to 611 residues: tRNA uridine 5-carboxymethylaminomethyl modification enzyme MnmG (611 aa).

14–19 (GAGHAG) is an FAD binding site. NAD(+) is bound at residue 274–288 (GPRYCPSIEDKIVKF).

Belongs to the MnmG family. Homodimer. Heterotetramer of two MnmE and two MnmG subunits. FAD is required as a cofactor.

The protein localises to the cytoplasm. Functionally, NAD-binding protein involved in the addition of a carboxymethylaminomethyl (cmnm) group at the wobble position (U34) of certain tRNAs, forming tRNA-cmnm(5)s(2)U34. This chain is tRNA uridine 5-carboxymethylaminomethyl modification enzyme MnmG, found in Chlamydia abortus (strain DSM 27085 / S26/3) (Chlamydophila abortus).